The following is a 545-amino-acid chain: CTP synthase (545 aa).

The segment at 1-266 (MTTNYIFVTG…DDLVCARFGI (266 aa)) is amidoligase domain. Ser-14 provides a ligand contact to CTP. Ser-14 is a binding site for UTP. ATP-binding positions include 15-20 (SLGKGI) and Asp-72. The Mg(2+) site is built by Asp-72 and Glu-140. Residues 147–149 (DIE), 187–192 (KTKPTQ), and Lys-223 each bind CTP. Residues 187–192 (KTKPTQ) and Lys-223 contribute to the UTP site. 239–241 (KDV) is a binding site for ATP. Positions 291–542 (TIGMVGKYIE…IKAAGENARG (252 aa)) constitute a Glutamine amidotransferase type-1 domain. Gly-352 contributes to the L-glutamine binding site. The active-site Nucleophile; for glutamine hydrolysis is Cys-379. L-glutamine contacts are provided by residues 380–383 (LGMQ), Glu-403, and Arg-470. Catalysis depends on residues His-515 and Glu-517.

The protein belongs to the CTP synthase family. In terms of assembly, homotetramer.

It carries out the reaction UTP + L-glutamine + ATP + H2O = CTP + L-glutamate + ADP + phosphate + 2 H(+). The enzyme catalyses L-glutamine + H2O = L-glutamate + NH4(+). The catalysed reaction is UTP + NH4(+) + ATP = CTP + ADP + phosphate + 2 H(+). Its pathway is pyrimidine metabolism; CTP biosynthesis via de novo pathway; CTP from UDP: step 2/2. With respect to regulation, allosterically activated by GTP, when glutamine is the substrate; GTP has no effect on the reaction when ammonia is the substrate. The allosteric effector GTP functions by stabilizing the protein conformation that binds the tetrahedral intermediate(s) formed during glutamine hydrolysis. Inhibited by the product CTP, via allosteric rather than competitive inhibition. Functionally, catalyzes the ATP-dependent amination of UTP to CTP with either L-glutamine or ammonia as the source of nitrogen. Regulates intracellular CTP levels through interactions with the four ribonucleotide triphosphates. The protein is CTP synthase of Vibrio vulnificus (strain CMCP6).